The primary structure comprises 330 residues: Virulence plasmid integrase pGP8-D (330 aa).

The region spanning 39 to 124 is the Core-binding (CB) domain; it reads FSLFEVIMHW…SYISLTRFLN (86 aa). Residues 152–327 enclose the Tyr recombinase domain; sequence VKTNAMNRLQ…SREDNASKKM (176 aa). Active-site residues include arginine 189, lysine 214, histidine 279, arginine 282, and histidine 305. Catalysis depends on tyrosine 314, which acts as the O-(3'-phospho-DNA)-tyrosine intermediate.

It belongs to the 'phage' integrase family.

This chain is Virulence plasmid integrase pGP8-D, found in Chlamydia muridarum (strain MoPn / Nigg).